A 309-amino-acid chain; its full sequence is Taste receptor type 2 member 20 (309 aa).

At 1-6 (MMSFLH) the chain is on the extracellular side. Residues 7 to 27 (IVFSILVVVAFILGNFANGFI) traverse the membrane as a helical segment. At 28–46 (ALINFIAWVKRQKISSADQ) the chain is on the cytoplasmic side. A helical membrane pass occupies residues 47–67 (IIAALAVSRVGLLWVILLHWY). At 68-79 (STVLNPTSSNLK) the chain is on the extracellular side. The chain crosses the membrane as a helical span at residues 80–100 (VIIFISNAWAVTNHFSIWLAT). The Cytoplasmic portion of the chain corresponds to 101–125 (SLSIFYLLKIVNFSRLIFHHLKRKA). A helical transmembrane segment spans residues 126 to 146 (KSVVLVIVLGSLFFLVCXLVM). The Extracellular portion of the chain corresponds to 147–178 (KNTYINVWTEECEGNVTWKIKLRNAMHLSNLT). The helical transmembrane segment at 179–199 (VAMLANLIPFTLTLISFLLLI) threads the bilayer. The Cytoplasmic portion of the chain corresponds to 200–229 (YSLCKHLKKMQLHGKGSQDPSTKIHIKALQ). The helical transmembrane segment at 230–250 (TVTSFLILLAIYFLCLITSFW) threads the bilayer. At 251-259 (NSKMRPKEI) the chain is on the extracellular side. A helical transmembrane segment spans residues 260–280 (VLMLCQAFGIIYPSFHSFILI). Topologically, residues 281 to 309 (WGNKTLKQTFLSVLWQVTCWAKGQNQSTP) are cytoplasmic.

It belongs to the G-protein coupled receptor T2R family.

Its subcellular location is the membrane. In terms of biological role, receptor that may play a role in the perception of bitterness and is gustducin-linked. May play a role in sensing the chemical composition of the gastrointestinal content. The activity of this receptor may stimulate alpha gustducin, mediate PLC-beta-2 activation and lead to the gating of TRPM5. This chain is Taste receptor type 2 member 20 (TAS2R20), found in Pan troglodytes (Chimpanzee).